A 221-amino-acid chain; its full sequence is Putative N-acetylmannosamine-6-phosphate 2-epimerase (221 aa).

It belongs to the NanE family.

It carries out the reaction an N-acyl-D-glucosamine 6-phosphate = an N-acyl-D-mannosamine 6-phosphate. It participates in amino-sugar metabolism; N-acetylneuraminate degradation; D-fructose 6-phosphate from N-acetylneuraminate: step 3/5. Functionally, converts N-acetylmannosamine-6-phosphate (ManNAc-6-P) to N-acetylglucosamine-6-phosphate (GlcNAc-6-P). The polypeptide is Putative N-acetylmannosamine-6-phosphate 2-epimerase (Clostridium perfringens (strain SM101 / Type A)).